Reading from the N-terminus, the 1263-residue chain is Condensin complex subunit dpy-26 (1263 aa).

Residues 1-10 show a composition bias toward polar residues; the sequence is MDVPSSSNVT. Positions 1 to 29 are disordered; the sequence is MDVPSSSNVTGRRKRQVLDDDEDDGFRST. The stretch at 691-725 forms a coiled coil; sequence NEQMDETEVEERNEQDVQRELEDIALAADEVAELM. 2 disordered regions span residues 1098 to 1118 and 1225 to 1263; these read YQAADERPNNQPTTSTYGTAN and FSNLMRRPKAVPVRKGRGAGGQPTTSDLGAIVEEEEMEE. Over residues 1106 to 1118 the composition is skewed to polar residues; sequence NNQPTTSTYGTAN. The segment covering 1230–1241 has biased composition (basic residues); sequence RRPKAVPVRKGR.

Component of the condensin I complex, which contains the mix-1/SMC2 and smc-4/SMC4 heterodimer, and three non SMC subunits that probably regulate the complex: dpy-26, capg-1 and dpy-28. Within the complex, interacts with dpy-28, mix-1, smc-4 and capg-1. Component of the dosage compensation complex, which consists of the condensin I-like components mix-1/SMC2 and dpy-27/SMC4, and the three non SMC subunits dpy-26, capg-1 and dpy-28. Within the complex, interacts with dpy-27, dpy-28, mix-1 and capg-1. The interaction with dpy-27 is required for dpy-27 protein stability. Interacts with smcl-1. Expressed in embryos and in somatic and germline tissues in L4 stage larvae (at protein level).

The protein localises to the nucleus. It is found in the chromosome. Functionally, required for both chromosome condensation and segregation and for X-chromosome dosage compensation depending on its binding partners. Member of the condensin I complex, a complex required for conversion of interphase chromatin into mitotic-like condense chromosomes and for proper chromosome segregation in mitosis and meiosis. As a member of the condensin I complex, further controls the crossover number and distribution in meiosis by restricting double strand break formation, probably by influencing higher-order chromosome structure. Plays a role in robust cytokinesis upon presence of chromatin obstructions. Also a member of the condensin I-like dosage compensation complex that associates specifically with hermaphrodite X chromosomes to reduce their gene transcription during interphase, possibly through chromatin reorganization. As a member of the dosage compensation complex, also binds to regulatory regions of the autosomal her-1 gene, required for male development, possibly contributing to its repression in hermaphrodites. The protein is Condensin complex subunit dpy-26 of Caenorhabditis elegans.